Reading from the N-terminus, the 292-residue chain is Ribosomal RNA small subunit methyltransferase A (292 aa).

The S-adenosyl-L-methionine site is built by Asn-29, Leu-31, Gly-56, Glu-77, Asp-102, and Asn-127.

Belongs to the class I-like SAM-binding methyltransferase superfamily. rRNA adenine N(6)-methyltransferase family. RsmA subfamily.

Its subcellular location is the cytoplasm. It catalyses the reaction adenosine(1518)/adenosine(1519) in 16S rRNA + 4 S-adenosyl-L-methionine = N(6)-dimethyladenosine(1518)/N(6)-dimethyladenosine(1519) in 16S rRNA + 4 S-adenosyl-L-homocysteine + 4 H(+). In terms of biological role, specifically dimethylates two adjacent adenosines (A1518 and A1519) in the loop of a conserved hairpin near the 3'-end of 16S rRNA in the 30S particle. May play a critical role in biogenesis of 30S subunits. The sequence is that of Ribosomal RNA small subunit methyltransferase A from Bacillus subtilis (strain 168).